A 74-amino-acid chain; its full sequence is Large ribosomal subunit protein bL31 (74 aa).

Positions 16, 18, 37, and 40 each coordinate Zn(2+).

Belongs to the bacterial ribosomal protein bL31 family. Type A subfamily. Part of the 50S ribosomal subunit. It depends on Zn(2+) as a cofactor.

Functionally, binds the 23S rRNA. This Koribacter versatilis (strain Ellin345) protein is Large ribosomal subunit protein bL31.